Consider the following 20-residue polypeptide: Phenol-soluble modulin alpha 4 peptide (20 aa).

It belongs to the phenol-soluble modulin alpha peptides family.

In terms of biological role, peptide which can recruit, activate and subsequently lyse neutrophils, thus eliminating the main cellular defense against infection. This is Phenol-soluble modulin alpha 4 peptide (psmA4) from Staphylococcus aureus (strain bovine RF122 / ET3-1).